Consider the following 330-residue polypeptide: D-lactate dehydrogenase (330 aa).

NAD(+) is bound by residues 156 to 157, aspartate 176, 206 to 207, 233 to 235, and aspartate 259; these read RI, VP, and AAR. Arginine 235 is a catalytic residue. The active site involves glutamate 264. Histidine 296 (proton donor) is an active-site residue.

The protein belongs to the D-isomer specific 2-hydroxyacid dehydrogenase family.

It carries out the reaction (R)-lactate + NAD(+) = pyruvate + NADH + H(+). In Staphylococcus aureus (strain Mu50 / ATCC 700699), this protein is D-lactate dehydrogenase (ldhD).